Consider the following 201-residue polypeptide: Lymphocyte antigen 6 complex locus protein G5b (201 aa).

Residues M1–G18 form the signal peptide. The region spanning R26–E118 is the UPAR/Ly6 domain. 5 cysteine pairs are disulfide-bonded: C28–C55, C31–C40, C47–C73, C81–C98, and C99–C104. 2 N-linked (GlcNAc...) asparagine glycosylation sites follow: N141 and N183.

Forms oligomer. Post-translationally, N-glycosylated.

The protein resides in the secreted. The sequence is that of Lymphocyte antigen 6 complex locus protein G5b (LY6G5B) from Homo sapiens (Human).